Reading from the N-terminus, the 227-residue chain is Lipoprotein-releasing system ATP-binding protein LolD (227 aa).

The ABC transporter domain occupies 7-227 (LQLTGVERHY…TISDGKIVDF (221 aa)). Residue 43-50 (APSGTGKS) coordinates ATP.

Belongs to the ABC transporter superfamily. Lipoprotein translocase (TC 3.A.1.125) family. As to quaternary structure, the complex is composed of two ATP-binding proteins (LolD) and two transmembrane proteins (LolC and LolE).

It is found in the cell inner membrane. Its function is as follows. Part of the ABC transporter complex LolCDE involved in the translocation of mature outer membrane-directed lipoproteins, from the inner membrane to the periplasmic chaperone, LolA. Responsible for the formation of the LolA-lipoprotein complex in an ATP-dependent manner. This chain is Lipoprotein-releasing system ATP-binding protein LolD, found in Rhizobium johnstonii (strain DSM 114642 / LMG 32736 / 3841) (Rhizobium leguminosarum bv. viciae).